The sequence spans 172 residues: Signal peptidase complex catalytic subunit SEC11 (172 aa).

Residues 1–14 (MLSSLANPRQAASQ) are Cytoplasmic-facing. The helical; Signal-anchor for type II membrane protein transmembrane segment at 15–35 (LLNFALILSTAFMMWKGLSVV) threads the bilayer. Topologically, residues 36–172 (SDSPSPIVVV…MGLVVVLQRE (137 aa)) are lumenal. Catalysis depends on charge relay system residues serine 49, histidine 90, and aspartate 115. Residues 158-169 (AMLGIMGLVVVL) are C-terminal short (CTS) helix.

This sequence belongs to the peptidase S26B family. As to quaternary structure, component of the signal peptidase complex (SPC) composed of a catalytic subunit SEC11 and three accessory subunits SPC1, SPC2 and SPC3. The complex induces a local thinning of the ER membrane which is used to measure the length of the signal peptide (SP) h-region of protein substrates. This ensures the selectivity of the complex towards h-regions shorter than 18-20 amino acids. SPC associates with the translocon complex.

It localises to the endoplasmic reticulum membrane. The enzyme catalyses Cleavage of hydrophobic, N-terminal signal or leader sequences from secreted and periplasmic proteins.. Its function is as follows. Catalytic component of the signal peptidase complex (SPC) which catalyzes the cleavage of N-terminal signal sequences from nascent proteins as they are translocated into the lumen of the endoplasmic reticulum. Specifically cleaves N-terminal signal peptides that contain a hydrophobic alpha-helix (h-region) shorter than 18-20 amino acids. The protein is Signal peptidase complex catalytic subunit SEC11 (SEC11) of Colletotrichum graminicola (strain M1.001 / M2 / FGSC 10212) (Maize anthracnose fungus).